The following is a 608-amino-acid chain: Albumin (608 aa).

The N-terminal stretch at 1-18 (MKWVTFISLLLLFSSAYS) is a signal peptide. Residues 19–24 (RGVTRR) constitute a propeptide that is removed on maturation. Albumin domains lie at 19–210 (RGVT…DALR), 211–403 (EKVL…EFKP), and 404–601 (LVEE…KLVA). A Cu cation-binding site is contributed by H27. Phosphoserine is present on S29. Positions 30 and 37 each coordinate Ca(2+). The cysteines at positions 77 and 86 are disulfide-linked. Phosphoserine occurs at positions 82 and 89. H91 is a Zn(2+) binding site. 6 cysteine pairs are disulfide-bonded: C99–C115, C114–C125, C148–C193, C192–C201, C224–C270, and C269–C277. An N6-succinyllysine modification is found at K229. Ca(2+) is bound at residue E268. The Zn(2+) site is built by H271 and D273. Positions 273, 276, 279, and 283 each coordinate Ca(2+). Intrachain disulfides connect C289-C303, C302-C313, C340-C385, C384-C393, C416-C462, C461-C472, C485-C501, and C500-C511. Residue S443 is modified to Phosphoserine. 2 positions are modified to phosphothreonine: T444 and T446. Position 460 is an N6-succinyllysine (K460). Residue S513 is modified to Phosphoserine. 2 disulfides stabilise this stretch: C538–C583 and C582–C591. Residue K558 is modified to N6-methyllysine. Position 570 is a phosphothreonine (T570). K588 is modified (N6-succinyllysine).

Belongs to the ALB/AFP/VDB family. As to quaternary structure, interacts with FCGRT; this interaction regulates ALB homeostasis. Interacts with TASOR. In plasma, occurs in a covalently-linked complex with chromophore-bound alpha-1-microglobulin; this interaction does not prevent fatty acid binding to ALB. In terms of processing, phosphorylated by FAM20C in the extracellular medium. As to expression, plasma.

It is found in the secreted. Its function is as follows. Binds water, Ca(2+), Na(+), K(+), fatty acids, hormones, bilirubin and drugs. Its main function is the regulation of the colloidal osmotic pressure of blood. Major zinc transporter in plasma, typically binds about 80% of all plasma zinc. Major calcium and magnesium transporter in plasma, binds approximately 45% of circulating calcium and magnesium in plasma. Potentially has more than two calcium-binding sites and might additionally bind calcium in a non-specific manner. The shared binding site between zinc and calcium at residue Asp-273 suggests a crosstalk between zinc and calcium transport in the blood. The rank order of affinity is zinc &gt; calcium &gt; magnesium. Binds to the bacterial siderophore enterobactin and inhibits enterobactin-mediated iron uptake of E.coli from ferric transferrin, and may thereby limit the utilization of iron and growth of enteric bacteria such as E.coli. Does not prevent iron uptake by the bacterial siderophore aerobactin. In Felis catus (Cat), this protein is Albumin (ALB).